We begin with the raw amino-acid sequence, 419 residues long: L-rhamnose isomerase (419 aa).

Positions 262, 294, and 296 each coordinate Mn(2+).

The protein belongs to the rhamnose isomerase family. In terms of assembly, homotetramer. It depends on Mn(2+) as a cofactor.

The protein localises to the cytoplasm. The enzyme catalyses L-rhamnopyranose = L-rhamnulose. Its pathway is carbohydrate degradation; L-rhamnose degradation; glycerone phosphate from L-rhamnose: step 1/3. Catalyzes the interconversion of L-rhamnose and L-rhamnulose. This Escherichia fergusonii (strain ATCC 35469 / DSM 13698 / CCUG 18766 / IAM 14443 / JCM 21226 / LMG 7866 / NBRC 102419 / NCTC 12128 / CDC 0568-73) protein is L-rhamnose isomerase.